The sequence spans 146 residues: Ribonuclease H (146 aa).

One can recognise an RNase H type-1 domain in the interval 1–143 (MKEIIIYTDG…CDQLARNAIK (143 aa)). Mg(2+) is bound by residues Asp-9, Glu-47, Asp-70, and Asp-135.

It belongs to the RNase H family. As to quaternary structure, monomer. Mg(2+) serves as cofactor.

Its subcellular location is the cytoplasm. It carries out the reaction Endonucleolytic cleavage to 5'-phosphomonoester.. Endonuclease that specifically degrades the RNA of RNA-DNA hybrids. This is Ribonuclease H from Syntrophomonas wolfei subsp. wolfei (strain DSM 2245B / Goettingen).